A 132-amino-acid chain; its full sequence is MTKDELIARLRSLGEQLNRDVSLTGTKEELALRVAELKEELDDTDETAGQDTPLSRENVLTGHENEVGSAQPDTVILDTSELVTVVALVKLHTDALHATRDEPVAFVLPGTAFRVSAGVAAEMTERGLARMQ.

The interval 81–132 is capsid binding; that stretch reads ELVTVVALVKLHTDALHATRDEPVAFVLPGTAFRVSAGVAAEMTERGLARMQ.

Interacts with major capsid protein via c-terminus.

The protein resides in the host cytoplasm. Its function is as follows. Stimulates the interaction of procapsid with the terminase-DNA complex, thereby increasing the overall rate of DNA packaging. Before packaging, it likely coats the surface of the procapsid through binding mediated by C-terminal domain. FI presumably dissociates from the capsid once it inflates upon DNA packaging, and is not present in the mature virion. In Escherichia coli (Bacteriophage lambda), this protein is DNA-packaging protein FI (Fi).